We begin with the raw amino-acid sequence, 727 residues long: Alpha-1,3-galactosidase A (727 aa).

Positions 220–241 are disordered; it reads ATNRTWRTSNPVFPERHEDHRP. Positions 221–230 are enriched in polar residues; sequence TNRTWRTSNP. PbH1 repeat units follow at residues 336–358, 461–483, 484–506, 517–538, 551–572, and 574–603; these read KGTV…NIHG, TPTV…LVTT, RRPV…YISS, VRNV…IFFD, HRNV…LSGR, and VGGL…RVGD.

This sequence belongs to the glycosyl hydrolase 110 family. A subfamily.

The enzyme catalyses Hydrolysis of terminal, non-reducing branched (1-&gt;3)-alpha-D-galactosidic residues, producing free D-galactose.. It catalyses the reaction Hydrolysis of terminal, non-reducing alpha-D-galactose residues in alpha-D-galactosides, including galactose oligosaccharides, galactomannans and galactolipids.. Its function is as follows. Alpha-galactosidase that specifically removes branched alpha-1,3-linked galactose residues present in blood group B antigens. Has no activity toward linear alpha-1,3-linked galactose residues. The polypeptide is Alpha-1,3-galactosidase A (glaA) (Peterkaempfera griseoplana (Streptacidiphilus griseoplanus)).